The chain runs to 215 residues: Phosphatidylserine decarboxylase proenzyme (215 aa).

Serine 185 (schiff-base intermediate with substrate; via pyruvic acid) is an active-site residue. Residue serine 185 is modified to Pyruvic acid (Ser); by autocatalysis.

It belongs to the phosphatidylserine decarboxylase family. PSD-A subfamily. Heterodimer of a large membrane-associated beta subunit and a small pyruvoyl-containing alpha subunit. It depends on pyruvate as a cofactor. Is synthesized initially as an inactive proenzyme. Formation of the active enzyme involves a self-maturation process in which the active site pyruvoyl group is generated from an internal serine residue via an autocatalytic post-translational modification. Two non-identical subunits are generated from the proenzyme in this reaction, and the pyruvate is formed at the N-terminus of the alpha chain, which is derived from the carboxyl end of the proenzyme. The post-translation cleavage follows an unusual pathway, termed non-hydrolytic serinolysis, in which the side chain hydroxyl group of the serine supplies its oxygen atom to form the C-terminus of the beta chain, while the remainder of the serine residue undergoes an oxidative deamination to produce ammonia and the pyruvoyl prosthetic group on the alpha chain.

Its subcellular location is the cell membrane. The catalysed reaction is a 1,2-diacyl-sn-glycero-3-phospho-L-serine + H(+) = a 1,2-diacyl-sn-glycero-3-phosphoethanolamine + CO2. It participates in phospholipid metabolism; phosphatidylethanolamine biosynthesis; phosphatidylethanolamine from CDP-diacylglycerol: step 2/2. Its function is as follows. Catalyzes the formation of phosphatidylethanolamine (PtdEtn) from phosphatidylserine (PtdSer). This is Phosphatidylserine decarboxylase proenzyme from Streptomyces avermitilis (strain ATCC 31267 / DSM 46492 / JCM 5070 / NBRC 14893 / NCIMB 12804 / NRRL 8165 / MA-4680).